Consider the following 160-residue polypeptide: MSDIKSLDDLKSVVGEAPVAEVAIAREPVRDSLGRSYATGKRKDAVARVWIKPGSGKVTVNGKPMDEYFARPVLQMILRQPFKVANVEGQFDVMATVAGGGLSGQAGAVKHGISKALQLYEPALRAALKAAGFLTRDSRVVERKKYGKAKARRSFQFSKR.

The protein belongs to the universal ribosomal protein uS9 family.

The sequence is that of Small ribosomal subunit protein uS9 from Cereibacter sphaeroides (strain ATCC 17029 / ATH 2.4.9) (Rhodobacter sphaeroides).